The following is a 62-amino-acid chain: uncharacterized protein (62 aa).

2 4Fe-4S ferredoxin-type domains span residues A2–G31 and D32–E62. [4Fe-4S] cluster is bound by residues C10, C15, C18, C22, C42, C45, C48, and C52.

Requires [4Fe-4S] cluster as cofactor.

This is an uncharacterized protein from Methanocaldococcus jannaschii (strain ATCC 43067 / DSM 2661 / JAL-1 / JCM 10045 / NBRC 100440) (Methanococcus jannaschii).